A 244-amino-acid chain; its full sequence is DNA repair protein RecO (244 aa).

Belongs to the RecO family.

Its function is as follows. Involved in DNA repair and RecF pathway recombination. The chain is DNA repair protein RecO from Caldicellulosiruptor bescii (strain ATCC BAA-1888 / DSM 6725 / KCTC 15123 / Z-1320) (Anaerocellum thermophilum).